Reading from the N-terminus, the 101-residue chain is NADH-quinone oxidoreductase subunit K (101 aa).

Transmembrane regions (helical) follow at residues 4 to 24 (LGHL…GIFL), 30 to 50 (IVLL…FIAF), and 62 to 82 (FVFF…AILV).

It belongs to the complex I subunit 4L family. NDH-1 is composed of 14 different subunits. Subunits NuoA, H, J, K, L, M, N constitute the membrane sector of the complex.

It localises to the cell inner membrane. It carries out the reaction a quinone + NADH + 5 H(+)(in) = a quinol + NAD(+) + 4 H(+)(out). In terms of biological role, NDH-1 shuttles electrons from NADH, via FMN and iron-sulfur (Fe-S) centers, to quinones in the respiratory chain. The immediate electron acceptor for the enzyme in this species is believed to be ubiquinone. Couples the redox reaction to proton translocation (for every two electrons transferred, four hydrogen ions are translocated across the cytoplasmic membrane), and thus conserves the redox energy in a proton gradient. The polypeptide is NADH-quinone oxidoreductase subunit K (Xanthomonas axonopodis pv. citri (strain 306)).